The sequence spans 576 residues: TOX high mobility group box family member 3 (576 aa).

3 disordered regions span residues 189 to 258, 422 to 443, and 519 to 563; these read NLGG…PQKP, TMVGSAPSTQVSPSVQTQQHQM, and LQHM…QIQS. Over residues 204 to 215 the composition is skewed to low complexity; that stretch reads ASKSATPSPSSS. Over residues 223–239 the composition is skewed to basic and acidic residues; that stretch reads EANRAIGEKRAAPDSGK. A compositionally biased stretch (basic residues) spans 240–250; the sequence is KPKTPKKKKKK. The segment at residues 255–323 is a DNA-binding region (HMG box); it reads PQKPVSAYAL…EYLKALAAYR (69 aa). The span at 428–443 shows a compositional bias: low complexity; the sequence is PSTQVSPSVQTQQHQM. Residues 528–542 are compositionally biased toward polar residues; it reads PSPRQHSPVASQITS. The span at 549 to 563 shows a compositional bias: low complexity; sequence SPQPASQQHQSQIQS.

Homodimer. Interacts with CREB1; the interaction is not depolarization dependent. Interacts with CREBBP (via C-terminus). Interacts (via HGM box) with CITED1 (via C-terminus); the interaction increases estrogen-response element (ERE)-dependent transcription and protection against cell death. Interacts with CREB1 (phosphorylated form). In terms of tissue distribution, expressed mainly in epithelial cells. Expressed in the central nervous system (CNS), in the ileum and within the brain in the frontal and occipital lobe.

The protein localises to the nucleus. Its function is as follows. Transcriptional coactivator of the p300/CBP-mediated transcription complex. Activates transactivation through cAMP response element (CRE) sites. Protects against cell death by inducing antiapoptotic and repressing pro-apoptotic transcripts. Stimulates transcription from the estrogen-responsive or BCL-2 promoters. Required for depolarization-induced transcription activation of the C-FOS promoter in neurons. Associates with chromatin to the estrogen-responsive C3 promoter region. The chain is TOX high mobility group box family member 3 (TOX3) from Homo sapiens (Human).